A 357-amino-acid polypeptide reads, in one-letter code: Peptide chain release factor 1 (357 aa).

N5-methylglutamine is present on Q233. Residues 284 to 305 form a disordered region; the sequence is RSASISADRKSQVGTGDRSERI.

This sequence belongs to the prokaryotic/mitochondrial release factor family. Methylated by PrmC. Methylation increases the termination efficiency of RF1.

Its subcellular location is the cytoplasm. In terms of biological role, peptide chain release factor 1 directs the termination of translation in response to the peptide chain termination codons UAG and UAA. The sequence is that of Peptide chain release factor 1 from Clostridium novyi (strain NT).